A 438-amino-acid polypeptide reads, in one-letter code: Protein phosphatase 2C homolog 2 (438 aa).

In terms of domain architecture, PPM-type phosphatase spans 23–294 (IYGVSAMQGW…DNMTMVIIGF (272 aa)). Residues Asp-67, Gly-68, Asp-236, and Asp-285 each contribute to the Mn(2+) site. The segment at 370–438 (VLTGSDDTEM…EKTPEESKKD (69 aa)) is disordered. Residues 375–387 (DDTEMFDNADEDK) are compositionally biased toward acidic residues. Basic and acidic residues predominate over residues 398–438 (GKTDAKEETEAKPAPEAESSKPADGSEKKQDEKTPEESKKD).

Belongs to the PP2C family. The cofactor is Mg(2+). Mn(2+) is required as a cofactor.

It is found in the cytoplasm. Its subcellular location is the nucleus. The enzyme catalyses O-phospho-L-seryl-[protein] + H2O = L-seryl-[protein] + phosphate. The catalysed reaction is O-phospho-L-threonyl-[protein] + H2O = L-threonyl-[protein] + phosphate. Functionally, dephosphorylating regulator for many key proteins. Negatively regulates the endoplasmic reticulum unfolded protein response. The polypeptide is Protein phosphatase 2C homolog 2 (Hypocrea jecorina (strain QM6a) (Trichoderma reesei)).